We begin with the raw amino-acid sequence, 754 residues long: Phosphoribosylformylglycinamidine synthase subunit PurL (754 aa).

His54 is a catalytic residue. ATP is bound by residues Tyr57 and Lys101. Glu103 contacts Mg(2+). Substrate-binding positions include 104–107 (SHNH) and Arg126. His105 serves as the catalytic Proton acceptor. Asp127 lines the Mg(2+) pocket. Gln252 is a substrate binding site. Asp280 lines the Mg(2+) pocket. 324-326 (ESQ) contacts substrate. A disordered region spans residues 386–412 (PVYQRPVSRPESQEALNADSSKGLPRP). 2 residues coordinate ATP: Asn512 and Gly549. Asn550 is a Mg(2+) binding site. Ser552 contacts substrate.

It belongs to the FGAMS family. In terms of assembly, monomer. Part of the FGAM synthase complex composed of 1 PurL, 1 PurQ and 2 PurS subunits.

It is found in the cytoplasm. The enzyme catalyses N(2)-formyl-N(1)-(5-phospho-beta-D-ribosyl)glycinamide + L-glutamine + ATP + H2O = 2-formamido-N(1)-(5-O-phospho-beta-D-ribosyl)acetamidine + L-glutamate + ADP + phosphate + H(+). The protein operates within purine metabolism; IMP biosynthesis via de novo pathway; 5-amino-1-(5-phospho-D-ribosyl)imidazole from N(2)-formyl-N(1)-(5-phospho-D-ribosyl)glycinamide: step 1/2. Part of the phosphoribosylformylglycinamidine synthase complex involved in the purines biosynthetic pathway. Catalyzes the ATP-dependent conversion of formylglycinamide ribonucleotide (FGAR) and glutamine to yield formylglycinamidine ribonucleotide (FGAM) and glutamate. The FGAM synthase complex is composed of three subunits. PurQ produces an ammonia molecule by converting glutamine to glutamate. PurL transfers the ammonia molecule to FGAR to form FGAM in an ATP-dependent manner. PurS interacts with PurQ and PurL and is thought to assist in the transfer of the ammonia molecule from PurQ to PurL. This chain is Phosphoribosylformylglycinamidine synthase subunit PurL, found in Mycobacterium leprae (strain Br4923).